The sequence spans 83 residues: Large ribosomal subunit protein bL27 (83 aa).

This sequence belongs to the bacterial ribosomal protein bL27 family.

The polypeptide is Large ribosomal subunit protein bL27 (Bifidobacterium adolescentis (strain ATCC 15703 / DSM 20083 / NCTC 11814 / E194a)).